Here is a 333-residue protein sequence, read N- to C-terminus: Ketol-acid reductoisomerase (NADP(+)) (333 aa).

The 181-residue stretch at 2–182 (AKIFYDSDCN…GASRAGIILT (181 aa)) folds into the KARI N-terminal Rossmann domain. NADP(+) contacts are provided by residues 25–28 (FGSQ), S51, S53, and 83–86 (DEKQ). H108 is a catalytic residue. Residue G134 coordinates NADP(+). A KARI C-terminal knotted domain is found at 183 to 328 (TFKEETETDL…KELRKMMPWI (146 aa)). Positions 191, 195, 227, and 231 each coordinate Mg(2+). Position 252 (S252) interacts with substrate.

Belongs to the ketol-acid reductoisomerase family. Mg(2+) serves as cofactor.

It carries out the reaction (2R)-2,3-dihydroxy-3-methylbutanoate + NADP(+) = (2S)-2-acetolactate + NADPH + H(+). It catalyses the reaction (2R,3R)-2,3-dihydroxy-3-methylpentanoate + NADP(+) = (S)-2-ethyl-2-hydroxy-3-oxobutanoate + NADPH + H(+). It functions in the pathway amino-acid biosynthesis; L-isoleucine biosynthesis; L-isoleucine from 2-oxobutanoate: step 2/4. The protein operates within amino-acid biosynthesis; L-valine biosynthesis; L-valine from pyruvate: step 2/4. In terms of biological role, involved in the biosynthesis of branched-chain amino acids (BCAA). Catalyzes an alkyl-migration followed by a ketol-acid reduction of (S)-2-acetolactate (S2AL) to yield (R)-2,3-dihydroxy-isovalerate. In the isomerase reaction, S2AL is rearranged via a Mg-dependent methyl migration to produce 3-hydroxy-3-methyl-2-ketobutyrate (HMKB). In the reductase reaction, this 2-ketoacid undergoes a metal-dependent reduction by NADPH to yield (R)-2,3-dihydroxy-isovalerate. This chain is Ketol-acid reductoisomerase (NADP(+)), found in Caldicellulosiruptor bescii (strain ATCC BAA-1888 / DSM 6725 / KCTC 15123 / Z-1320) (Anaerocellum thermophilum).